Here is a 187-residue protein sequence, read N- to C-terminus: Bis(5'-nucleosyl)-tetraphosphatase, symmetrical (187 aa).

The region spanning arginine 18–asparagine 132 is the HD domain. ADP is bound at residue histidine 21. Residues histidine 21, histidine 50, and aspartate 51 each contribute to the Fe cation site. ADP-binding positions include aspartate 51–lysine 54, histidine 83, histidine 109–threonine 110, aspartate 127, arginine 133, and proline 170–threonine 175. Aspartate 127 is a Fe cation binding site.

Belongs to the Ap4A hydrolase YqeK family. Homodimer.

It carries out the reaction P(1),P(4)-bis(5'-adenosyl) tetraphosphate + H2O = 2 ADP + 2 H(+). Functionally, hydrolyzes diadenosine 5',5'''-P1,P4-tetraphosphate (Ap4A) to yield ADP. This chain is Bis(5'-nucleosyl)-tetraphosphatase, symmetrical, found in Halalkalibacterium halodurans (strain ATCC BAA-125 / DSM 18197 / FERM 7344 / JCM 9153 / C-125) (Bacillus halodurans).